We begin with the raw amino-acid sequence, 403 residues long: Multifunctional CCA protein (403 aa).

Gly8 and Arg11 together coordinate ATP. Positions 8 and 11 each coordinate CTP. Residues Asp21 and Asp23 each contribute to the Mg(2+) site. Arg91, Arg137, and Arg140 together coordinate ATP. CTP-binding residues include Arg91, Arg137, and Arg140. One can recognise an HD domain in the interval 228 to 329; the sequence is TGIHTLMVAK…LKVLGLLDVW (102 aa).

Belongs to the tRNA nucleotidyltransferase/poly(A) polymerase family. Bacterial CCA-adding enzyme type 1 subfamily. As to quaternary structure, monomer. Can also form homodimers and oligomers. Mg(2+) is required as a cofactor. Ni(2+) serves as cofactor.

The enzyme catalyses a tRNA precursor + 2 CTP + ATP = a tRNA with a 3' CCA end + 3 diphosphate. The catalysed reaction is a tRNA with a 3' CCA end + 2 CTP + ATP = a tRNA with a 3' CCACCA end + 3 diphosphate. In terms of biological role, catalyzes the addition and repair of the essential 3'-terminal CCA sequence in tRNAs without using a nucleic acid template. Adds these three nucleotides in the order of C, C, and A to the tRNA nucleotide-73, using CTP and ATP as substrates and producing inorganic pyrophosphate. tRNA 3'-terminal CCA addition is required both for tRNA processing and repair. Also involved in tRNA surveillance by mediating tandem CCA addition to generate a CCACCA at the 3' terminus of unstable tRNAs. While stable tRNAs receive only 3'-terminal CCA, unstable tRNAs are marked with CCACCA and rapidly degraded. This is Multifunctional CCA protein from Vibrio cholerae serotype O1 (strain ATCC 39315 / El Tor Inaba N16961).